The sequence spans 743 residues: UvrABC system protein C (743 aa).

The GIY-YIG domain occupies 16–95 (VDPGVYKFRD…IKEFDPRFNV (80 aa)). A UVR domain is found at 208–243 (DKLVRQLEARMQQASEELDFETAARLRDDVGALRRA). Disordered regions lie at residues 497–543 (AEAA…QTGR) and 694–743 (PSAD…TGVE). Positions 506–520 (QASDTDGDQVSDTDG) are enriched in acidic residues. The span at 734-743 (QSASQRTGVE) shows a compositional bias: polar residues.

Belongs to the UvrC family. In terms of assembly, interacts with UvrB in an incision complex.

The protein localises to the cytoplasm. The UvrABC repair system catalyzes the recognition and processing of DNA lesions. UvrC both incises the 5' and 3' sides of the lesion. The N-terminal half is responsible for the 3' incision and the C-terminal half is responsible for the 5' incision. The polypeptide is UvrABC system protein C (Rhodococcus opacus (strain B4)).